Consider the following 102-residue polypeptide: Turripeptide OL55-like (102 aa).

In terms of processing, contains 8 disulfide bonds. As to expression, expressed by the venom duct.

It localises to the secreted. Functionally, acts as a neurotoxin by inhibiting an ion channel. This Lophiotoma acuta (Marbled turris) protein is Turripeptide OL55-like.